Consider the following 300-residue polypeptide: F-box/LRR-repeat protein 15 (300 aa).

An N-acetylmethionine modification is found at M1. One can recognise an F-box domain in the interval 19–66 (LLDLPWEDVLLPHVLNWVPLRQLLRLQRVSRAFRALVQLHLARLRRFD). Positions 113-269 (NPQLRSVALA…EPSLSRLRKR (157 aa)) are interaction with SMURF1. 5 LRR repeats span residues 141–162 (RLQR…RGLA), 167–188 (ALEE…VYLA), 194–215 (GLRS…QELA), 220–241 (QLEH…RTLA), and 246–267 (ALRS…SRLR).

This sequence belongs to the FBXL15 family. In terms of assembly, part of the SCF (SKP1-CUL1-F-box) E3 ubiquitin-protein ligase complex SCF(FBXL15) composed of CUL1, SKP1, RBX1 and FBXL15.

It localises to the cytoplasm. It participates in protein modification; protein ubiquitination. In terms of biological role, substrate recognition component of a SCF (SKP1-CUL1-F-box protein) E3 ubiquitin-protein ligase complex which mediates the ubiquitination and subsequent proteasomal degradation of SMURF1, thereby acting as a positive regulator of the BMP signaling pathway. Required for dorsal/ventral pattern formation. Also mediates ubiquitination of SMURF2 and WWP2. Required for bone mass maintenance. The sequence is that of F-box/LRR-repeat protein 15 (Fbxl15) from Rattus norvegicus (Rat).